A 251-amino-acid chain; its full sequence is Triosephosphate isomerase (251 aa).

Residue 9–11 (NWK) participates in substrate binding. The active-site Electrophile is His-95. Catalysis depends on Glu-167, which acts as the Proton acceptor. Substrate-binding positions include Gly-173, Ser-213, and 234-235 (GG).

It belongs to the triosephosphate isomerase family. Homodimer.

The protein localises to the cytoplasm. The catalysed reaction is D-glyceraldehyde 3-phosphate = dihydroxyacetone phosphate. The protein operates within carbohydrate biosynthesis; gluconeogenesis. It participates in carbohydrate degradation; glycolysis; D-glyceraldehyde 3-phosphate from glycerone phosphate: step 1/1. Involved in the gluconeogenesis. Catalyzes stereospecifically the conversion of dihydroxyacetone phosphate (DHAP) to D-glyceraldehyde-3-phosphate (G3P). The protein is Triosephosphate isomerase of Latilactobacillus sakei subsp. sakei (strain 23K) (Lactobacillus sakei subsp. sakei).